Here is a 104-residue protein sequence, read N- to C-terminus: Fusaric acid biosynthesis protein 2 (104 aa).

This sequence belongs to the YciI family.

It functions in the pathway mycotoxin biosynthesis. Part of the gene cluster that mediates the biosynthesis of fusaric acid, a mycotoxin with low to moderate toxicity to animals and humans, but with high phytotoxic properties. L-aspartate is suggested as fusaric acid amino acid precursor that is activated and further processed to O-acetyl-L-homoserine by cluster enzymes aspartate kinase FUB3 and homoserine O-acetyltransferase FUB5, as well as enzymes of the primary metabolism. The polyketide synthase (PKS) FUB1 generates the triketide trans-2-hexenal which is presumptively released by the hydrolase FUB4 and linked to the NRPS-bound amino acid precursor by NAD(P)-dependent dehydrogenase FUB6. FUB1, FUB4, and the non-canonical NRPS Fub8 may form an enzyme complex. Further processing of the NRPS-bound intermediate might be carried out by FUB6 and the sulfhydrylase FUB7, enabling a spontaneous electrocyclization to close the carbon backbone of fusaric acid. Dihydrofusaric acid is likely to be released via reduction by the thioester reductase (TR) domain of FUB8 whereupon the final oxidation to fusaric acid may (also) be performed by the FMN-dependent dehydrogenase FUB9. This chain is Fusaric acid biosynthesis protein 2, found in Gibberella fujikuroi (strain CBS 195.34 / IMI 58289 / NRRL A-6831) (Bakanae and foot rot disease fungus).